Reading from the N-terminus, the 471-residue chain is Glutamate--tRNA ligase (471 aa).

The 'HIGH' region motif lies at 9 to 19; that stretch reads PSPTGYLHVGG. 4 residues coordinate Zn(2+): cysteine 98, cysteine 100, cysteine 125, and histidine 127. The 'KMSKS' region signature appears at 237–241; sequence KLSKR. Residue lysine 240 participates in ATP binding.

The protein belongs to the class-I aminoacyl-tRNA synthetase family. Glutamate--tRNA ligase type 1 subfamily. As to quaternary structure, monomer. It depends on Zn(2+) as a cofactor.

The protein localises to the cytoplasm. It carries out the reaction tRNA(Glu) + L-glutamate + ATP = L-glutamyl-tRNA(Glu) + AMP + diphosphate. In terms of biological role, catalyzes the attachment of glutamate to tRNA(Glu) in a two-step reaction: glutamate is first activated by ATP to form Glu-AMP and then transferred to the acceptor end of tRNA(Glu). This Salmonella gallinarum (strain 287/91 / NCTC 13346) protein is Glutamate--tRNA ligase.